The sequence spans 549 residues: NADH-quinone oxidoreductase subunit N (549 aa).

A run of 14 helical transmembrane segments spans residues 26-46 (LSPL…EAFV), 57-77 (ALAM…VGAL), 96-116 (PSLF…LLIA), 148-168 (HTEV…FTAA), 171-191 (FLTM…LCGL), 206-226 (YFLL…MVYG), 253-273 (LLIG…TVPF), 297-317 (LVAA…TTVA), 321-341 (PMLW…AVTQ), 347-367 (LLAY…VAAN), 375-395 (MFYL…VTLV), 421-441 (AASL…SGFI), 466-486 (SAVT…AEPA), and 496-516 (GILT…LGIL).

This sequence belongs to the complex I subunit 2 family. NDH-1 is composed of 14 different subunits. Subunits NuoA, H, J, K, L, M, N constitute the membrane sector of the complex.

Its subcellular location is the cell membrane. It carries out the reaction a quinone + NADH + 5 H(+)(in) = a quinol + NAD(+) + 4 H(+)(out). In terms of biological role, NDH-1 shuttles electrons from NADH, via FMN and iron-sulfur (Fe-S) centers, to quinones in the respiratory chain. The immediate electron acceptor for the enzyme in this species is believed to be a menaquinone. Couples the redox reaction to proton translocation (for every two electrons transferred, four hydrogen ions are translocated across the cytoplasmic membrane), and thus conserves the redox energy in a proton gradient. In Thermobifida fusca (strain YX), this protein is NADH-quinone oxidoreductase subunit N.